Here is a 206-residue protein sequence, read N- to C-terminus: N-(5'-phosphoribosyl)anthranilate isomerase (206 aa).

Belongs to the TrpF family.

The catalysed reaction is N-(5-phospho-beta-D-ribosyl)anthranilate = 1-(2-carboxyphenylamino)-1-deoxy-D-ribulose 5-phosphate. It participates in amino-acid biosynthesis; L-tryptophan biosynthesis; L-tryptophan from chorismate: step 3/5. The polypeptide is N-(5'-phosphoribosyl)anthranilate isomerase (Rubrobacter xylanophilus (strain DSM 9941 / JCM 11954 / NBRC 16129 / PRD-1)).